Reading from the N-terminus, the 198-residue chain is GTP-binding protein Di-Ras1 (198 aa).

GTP contacts are provided by residues 17–22 (GVGKSS), 33–39 (RDTYIPT), 61–65 (DTTGS), 121–125 (NKCDE), Ala151, and 151–152 (AK). The short motif at 36 to 44 (YIPTIEDTY) is the Effector region element. The span at 178 to 192 (DGKRSGKQKRTDRVK) shows a compositional bias: basic and acidic residues. Residues 178–198 (DGKRSGKQKRTDRVKGKCTLM) form a disordered region. Cysteine methyl ester is present on Cys195. A lipid anchor (S-geranylgeranyl cysteine) is attached at Cys195. A propeptide spans 196 to 198 (TLM) (removed in mature form).

The protein belongs to the small GTPase superfamily. Di-Ras family. In terms of tissue distribution, highly expressed in heart and brain.

Its subcellular location is the cell membrane. In terms of biological role, displays low GTPase activity and exists predominantly in the GTP-bound form. The sequence is that of GTP-binding protein Di-Ras1 (DIRAS1) from Homo sapiens (Human).